We begin with the raw amino-acid sequence, 322 residues long: DNA primase small subunit PriS (322 aa).

Active-site residues include aspartate 86, aspartate 88, and aspartate 226.

Belongs to the eukaryotic-type primase small subunit family. Heterodimer of a small subunit (PriS) and a large subunit (PriL). Requires Mg(2+) as cofactor. Mn(2+) serves as cofactor.

Catalytic subunit of DNA primase, an RNA polymerase that catalyzes the synthesis of short RNA molecules used as primers for DNA polymerase during DNA replication. The small subunit contains the primase catalytic core and has DNA synthesis activity on its own. Binding to the large subunit stabilizes and modulates the activity, increasing the rate of DNA synthesis while decreasing the length of the DNA fragments, and conferring RNA synthesis capability. The DNA polymerase activity may enable DNA primase to also catalyze primer extension after primer synthesis. May also play a role in DNA repair. In Thermoplasma acidophilum (strain ATCC 25905 / DSM 1728 / JCM 9062 / NBRC 15155 / AMRC-C165), this protein is DNA primase small subunit PriS.